We begin with the raw amino-acid sequence, 439 residues long: Divalent metal cation transporter MntH (439 aa).

11 consecutive transmembrane segments (helical) span residues 32–52 (GASMLLPFAGPAVVVSVAYMD), 67–87 (GYALLWVVLLANVVAMLFQSL), 121–141 (IAAMATDLAAFLGGAIGLSLL), 144–164 (MPLLGGMVVTAIVTYGLLLLE), 173–193 (LAIGALVGIIGLSYLAELFIT), 214–234 (ALLIAVGIVGATVMPHALFLH), 261–281 (VVVALAIAGLINMAMVIMAAG), 301–321 (APLLGIGAAGVFLLSLIASGI), 350–370 (AVTMAPSFAVVALGVNVTQAL), 371–391 (VLSQVVLSLALPLPMAALLWF), and 406–426 (FIAVIATLAACAVLAFNAVLI).

The protein belongs to the NRAMP family.

It is found in the cell inner membrane. Its function is as follows. H(+)-stimulated, divalent metal cation uptake system. This Verminephrobacter eiseniae (strain EF01-2) protein is Divalent metal cation transporter MntH.